A 271-amino-acid polypeptide reads, in one-letter code: NADPH-dependent 7-cyano-7-deazaguanine reductase (271 aa).

Residue 79–81 (IES) coordinates substrate. An NADPH-binding site is contributed by 81 to 82 (SK). The Thioimide intermediate role is filled by Cys-178. The Proton donor role is filled by Asp-185. 217 to 218 (HE) is a binding site for substrate. 246 to 247 (RG) provides a ligand contact to NADPH.

This sequence belongs to the GTP cyclohydrolase I family. QueF type 2 subfamily. Homodimer.

It localises to the cytoplasm. The catalysed reaction is 7-aminomethyl-7-carbaguanine + 2 NADP(+) = 7-cyano-7-deazaguanine + 2 NADPH + 3 H(+). It functions in the pathway tRNA modification; tRNA-queuosine biosynthesis. Functionally, catalyzes the NADPH-dependent reduction of 7-cyano-7-deazaguanine (preQ0) to 7-aminomethyl-7-deazaguanine (preQ1). The protein is NADPH-dependent 7-cyano-7-deazaguanine reductase of Acinetobacter baylyi (strain ATCC 33305 / BD413 / ADP1).